A 303-amino-acid polypeptide reads, in one-letter code: Putative S-adenosyl-L-methionine-dependent methyltransferase Mb1931c (303 aa).

S-adenosyl-L-methionine-binding positions include Asp129 and 158–159; that span reads DL.

Belongs to the UPF0677 family.

Its function is as follows. Exhibits S-adenosyl-L-methionine-dependent methyltransferase activity. The protein is Putative S-adenosyl-L-methionine-dependent methyltransferase Mb1931c of Mycobacterium bovis (strain ATCC BAA-935 / AF2122/97).